Here is a 63-residue protein sequence, read N- to C-terminus: Arabinogalactan protein 22 (63 aa).

The first 27 residues, 1-27 (MASLKFPLEILAVFVIISVILLPIAQS), serve as a signal peptide directing secretion. 3 positions are modified to 4-hydroxyproline: Pro-32, Pro-34, and Pro-36. 3 O-linked (Ara...) hydroxyproline glycosylation sites follow: Pro-32, Pro-34, and Pro-36. Ser-38 carries the GPI-anchor amidated serine lipid modification. A propeptide spans 39 to 63 (DGTSIDQGIAYVLMMVALALTYFIH) (removed in mature form).

Belongs to the AG-peptide AGP family. Contains 4-hydroxyproline; hydroxylated on Pro-32, Pro-34 and Pro-36. In terms of processing, O-glycosylated on hydroxyprolines; noncontiguous hydroxylproline residues are glycosylated with arabinogalactan.

The protein localises to the cell membrane. Proteoglycan that seems to be implicated in diverse developmental roles such as differentiation, cell-cell recognition, embryogenesis and programmed cell death. This is Arabinogalactan protein 22 from Arabidopsis thaliana (Mouse-ear cress).